The following is a 112-amino-acid chain: Ribonuclease P protein component (112 aa).

Belongs to the RnpA family. Consists of a catalytic RNA component (M1 or rnpB) and a protein subunit.

It catalyses the reaction Endonucleolytic cleavage of RNA, removing 5'-extranucleotides from tRNA precursor.. Functionally, RNaseP catalyzes the removal of the 5'-leader sequence from pre-tRNA to produce the mature 5'-terminus. It can also cleave other RNA substrates such as 4.5S RNA. The protein component plays an auxiliary but essential role in vivo by binding to the 5'-leader sequence and broadening the substrate specificity of the ribozyme. The sequence is that of Ribonuclease P protein component from Mycoplasma mobile (strain ATCC 43663 / 163K / NCTC 11711) (Mesomycoplasma mobile).